A 330-amino-acid polypeptide reads, in one-letter code: Cathepsin S (330 aa).

Positions Met1–Ala17 are cleaved as a signal peptide. A propeptide spans Glu18–Thr112 (activation peptide). Residues Asn100 and Asn110 are each glycosylated (N-linked (GlcNAc...) asparagine). 4 disulfide bridges follow: Cys124–Cys222, Cys134–Cys179, Cys168–Cys211, and Cys271–Cys319. Residue Cys137 is part of the active site. Residues His277 and Asn297 contribute to the active site.

This sequence belongs to the peptidase C1 family. In terms of assembly, monomer. In terms of tissue distribution, highest levels occur in the ileum followed by spleen, brain, thyroid, ovary and uterus. Low levels are found in the liver, kidney, jejunum and lung with lowest levels in the heart.

It is found in the lysosome. The protein localises to the secreted. Its subcellular location is the cytoplasmic vesicle. It localises to the phagosome. The enzyme catalyses Similar to cathepsin L, but with much less activity on Z-Phe-Arg-|-NHMec, and more activity on the Z-Val-Val-Arg-|-Xaa compound.. Functionally, thiol protease. Key protease responsible for the removal of the invariant chain from MHC class II molecules and MHC class II antigen presentation. The bond-specificity of this proteinase is in part similar to the specificities of cathepsin L. The protein is Cathepsin S (Ctss) of Rattus norvegicus (Rat).